Reading from the N-terminus, the 120-residue chain is Large ribosomal subunit protein uL18 (120 aa).

The protein belongs to the universal ribosomal protein uL18 family. Part of the 50S ribosomal subunit; part of the 5S rRNA/L5/L18/L25 subcomplex. Contacts the 5S and 23S rRNAs.

Its function is as follows. This is one of the proteins that bind and probably mediate the attachment of the 5S RNA into the large ribosomal subunit, where it forms part of the central protuberance. The protein is Large ribosomal subunit protein uL18 of Herminiimonas arsenicoxydans.